Here is a 342-residue protein sequence, read N- to C-terminus: Nucleoid-associated protein Sputcn32_2288 (342 aa).

This sequence belongs to the YejK family.

It localises to the cytoplasm. Its subcellular location is the nucleoid. This Shewanella putrefaciens (strain CN-32 / ATCC BAA-453) protein is Nucleoid-associated protein Sputcn32_2288.